We begin with the raw amino-acid sequence, 96 residues long: Ribonuclease P protein component 1 (96 aa).

The protein belongs to the eukaryotic/archaeal RNase P protein component 1 family. As to quaternary structure, consists of a catalytic RNA component and at least 4-5 protein subunits.

Its subcellular location is the cytoplasm. The enzyme catalyses Endonucleolytic cleavage of RNA, removing 5'-extranucleotides from tRNA precursor.. In terms of biological role, part of ribonuclease P, a protein complex that generates mature tRNA molecules by cleaving their 5'-ends. The sequence is that of Ribonuclease P protein component 1 from Methanococcus aeolicus (strain ATCC BAA-1280 / DSM 17508 / OCM 812 / Nankai-3).